Reading from the N-terminus, the 503-residue chain is Maturase K (503 aa).

This sequence belongs to the intron maturase 2 family. MatK subfamily.

The protein localises to the plastid. It is found in the chloroplast. In terms of biological role, usually encoded in the trnK tRNA gene intron. Probably assists in splicing its own and other chloroplast group II introns. The sequence is that of Maturase K from Actinodium cunninghamii (Albany daisy).